We begin with the raw amino-acid sequence, 436 residues long: UPF0597 protein YhaM (436 aa).

Belongs to the UPF0597 family.

This is UPF0597 protein YhaM from Salmonella heidelberg (strain SL476).